A 557-amino-acid polypeptide reads, in one-letter code: Hepatocyte nuclear factor 1-beta (557 aa).

Residues 1–31 (MVSKLTSLQQELLSALLSSGVTKEVLIQALE) are dimerization. The region spanning 1–32 (MVSKLTSLQQELLSALLSSGVTKEVLIQALEE) is the HNF-p1 domain. Phosphoserine occurs at positions 49, 52, 75, and 80. A disordered region spans residues 66–85 (TNGHAKGRLSGDEGSEDGDD). The region spanning 93-188 (KELQALNTEE…ILRQFNQTVQ (96 aa)) is the POU-specific atypical domain. Positions 231 to 311 (MRRNRFKWGP…NRRKEEAFRQ (81 aa)) form a DNA-binding region, homeobox; HNF1-type. The tract at residues 324–370 (HNLNPLLTHGSPHHQPSSSPPNKLSGVRYSQPGNNEVTSSSTISHHG) is disordered. Residues 354–370 (QPGNNEVTSSSTISHHG) are compositionally biased toward polar residues.

The protein belongs to the HNF1 homeobox family. In terms of assembly, binds DNA as a dimer. Can form homodimer or heterodimer with HNF1-alpha. Interacts (via HNF-p1 domain) with PCBD1; the interaction increases its transactivation activity. In terms of tissue distribution, liver, kidney and intestine.

It localises to the nucleus. Functionally, transcription factor that binds to the inverted palindrome 5'-GTTAATNATTAAC-3'. Binds to the FPC element in the cAMP regulatory unit of the PLAU gene. Transcriptional activity is increased by coactivator PCBD1. This is Hepatocyte nuclear factor 1-beta (Hnf1b) from Rattus norvegicus (Rat).